A 283-amino-acid polypeptide reads, in one-letter code: Phosphatidylserine decarboxylase proenzyme (283 aa).

Residues Asp-96, His-152, and Ser-250 each act as charge relay system; for autoendoproteolytic cleavage activity in the active site. Catalysis depends on Ser-250, which acts as the Schiff-base intermediate with substrate; via pyruvic acid; for decarboxylase activity. Residue Ser-250 is modified to Pyruvic acid (Ser); by autocatalysis.

This sequence belongs to the phosphatidylserine decarboxylase family. PSD-B subfamily. Prokaryotic type I sub-subfamily. As to quaternary structure, heterodimer of a large membrane-associated beta subunit and a small pyruvoyl-containing alpha subunit. The cofactor is pyruvate. Post-translationally, is synthesized initially as an inactive proenzyme. Formation of the active enzyme involves a self-maturation process in which the active site pyruvoyl group is generated from an internal serine residue via an autocatalytic post-translational modification. Two non-identical subunits are generated from the proenzyme in this reaction, and the pyruvate is formed at the N-terminus of the alpha chain, which is derived from the carboxyl end of the proenzyme. The autoendoproteolytic cleavage occurs by a canonical serine protease mechanism, in which the side chain hydroxyl group of the serine supplies its oxygen atom to form the C-terminus of the beta chain, while the remainder of the serine residue undergoes an oxidative deamination to produce ammonia and the pyruvoyl prosthetic group on the alpha chain. During this reaction, the Ser that is part of the protease active site of the proenzyme becomes the pyruvoyl prosthetic group, which constitutes an essential element of the active site of the mature decarboxylase.

The protein resides in the cell membrane. It carries out the reaction a 1,2-diacyl-sn-glycero-3-phospho-L-serine + H(+) = a 1,2-diacyl-sn-glycero-3-phosphoethanolamine + CO2. It functions in the pathway phospholipid metabolism; phosphatidylethanolamine biosynthesis; phosphatidylethanolamine from CDP-diacylglycerol: step 2/2. Functionally, catalyzes the formation of phosphatidylethanolamine (PtdEtn) from phosphatidylserine (PtdSer). This is Phosphatidylserine decarboxylase proenzyme from Acinetobacter baumannii (strain AB0057).